The chain runs to 152 residues: CASP-like protein 5C3 (152 aa).

Topologically, residues 1 to 17 are cytoplasmic; the sequence is MVEVPGSVGTTASLSLR. The helical transmembrane segment at 18–38 threads the bilayer; the sequence is LGQMVLAFGSLLFMTIGVRFY. The Extracellular segment spans residues 39–42; the sequence is QFTA. A helical transmembrane segment spans residues 43–63; the sequence is FCYLVTIMSLAIPWNLTLAMV. At 64-78 the chain is on the cytoplasmic side; that stretch reads DIYCVILQQPFQKPR. Residues 79 to 99 traverse the membrane as a helical segment; sequence ILLAISIGDWVVSVLALASAS. At 100-128 the chain is on the extracellular side; sequence SAASVVDILRSNESSCPPTICNRYQFAAT. N-linked (GlcNAc...) asparagine glycosylation occurs at Asn-111. The chain crosses the membrane as a helical span at residues 129–149; it reads LAFLTWFLSLSSSLFNLWLLP. Topologically, residues 150 to 152 are cytoplasmic; it reads SLI.

It belongs to the Casparian strip membrane proteins (CASP) family. As to quaternary structure, homodimer and heterodimers. Expressed in the floral organ abscission zone and flower buds.

It localises to the cell membrane. The chain is CASP-like protein 5C3 from Arabidopsis thaliana (Mouse-ear cress).